The following is a 185-amino-acid chain: Virulence membrane protein PagC (185 aa).

Residues 1–23 form the signal peptide; the sequence is MKNIILSTLVITTSVLVVNVAQA.

The protein belongs to the outer membrane OOP (TC 1.B.6) superfamily. Ail family.

Its subcellular location is the cell outer membrane. In terms of biological role, essential for full virulence and survival within macrophages. The protein is Virulence membrane protein PagC (pagC) of Salmonella typhimurium (strain LT2 / SGSC1412 / ATCC 700720).